Reading from the N-terminus, the 302-residue chain is Surfeit locus protein 4 homolog (302 aa).

The next 6 membrane-spanning stretches (helical) occupy residues 95–115 (APLLLFVCVVLMLVGSTLVVF), 120–140 (AYAIGSLLFVTLLQAFAYGLI), 193–213 (VLLIFMFLGLLAKEGSGISWT), 215–235 (ILVHILSVTACAMVVIGFKAK), 236–256 (FFAAVLVLILSVANFIINSFW), and 271–291 (DFFQTLSIVGGLLYLVNTGPG). The Di-lysine motif motif lies at 299-302 (KKIY).

Belongs to the SURF4 family.

The protein localises to the endoplasmic reticulum membrane. This Schizosaccharomyces pombe (strain 972 / ATCC 24843) (Fission yeast) protein is Surfeit locus protein 4 homolog.